The chain runs to 342 residues: 4-hydroxy-2-oxovalerate aldolase (342 aa).

The 253-residue stretch at 8–260 (ITVHDMTLRD…ATGVDLFKMQ (253 aa)) folds into the Pyruvate carboxyltransferase domain. Residue 16–17 (RD) coordinates substrate. Residue Asp-17 coordinates Mn(2+). His-20 (proton acceptor) is an active-site residue. Ser-170 and His-199 together coordinate substrate. Mn(2+) contacts are provided by His-199 and His-201. Tyr-290 lines the substrate pocket.

The protein belongs to the 4-hydroxy-2-oxovalerate aldolase family.

It catalyses the reaction (S)-4-hydroxy-2-oxopentanoate = acetaldehyde + pyruvate. This Albidiferax ferrireducens (strain ATCC BAA-621 / DSM 15236 / T118) (Rhodoferax ferrireducens) protein is 4-hydroxy-2-oxovalerate aldolase.